A 435-amino-acid polypeptide reads, in one-letter code: Nicotinate phosphoribosyltransferase (435 aa).

His230 is modified (phosphohistidine; by autocatalysis).

Belongs to the NAPRTase family. Post-translationally, transiently phosphorylated on a His residue during the reaction cycle. Phosphorylation strongly increases the affinity for substrates and increases the rate of nicotinate D-ribonucleotide production. Dephosphorylation regenerates the low-affinity form of the enzyme, leading to product release.

The catalysed reaction is nicotinate + 5-phospho-alpha-D-ribose 1-diphosphate + ATP + H2O = nicotinate beta-D-ribonucleotide + ADP + phosphate + diphosphate. It participates in cofactor biosynthesis; NAD(+) biosynthesis; nicotinate D-ribonucleotide from nicotinate: step 1/1. In terms of biological role, catalyzes the synthesis of beta-nicotinate D-ribonucleotide from nicotinate and 5-phospho-D-ribose 1-phosphate at the expense of ATP. The sequence is that of Nicotinate phosphoribosyltransferase from Vibrio cholerae serotype O1 (strain ATCC 39541 / Classical Ogawa 395 / O395).